A 100-amino-acid polypeptide reads, in one-letter code: MSEKQNSRDHKRRLLAAKFELRRKLYKAFCKDPDLPSDMRDKHRYKLSKLPRNSSFARVRNRCISTGRPRSVSEFFRIYRIVFRGLASRGSLMGIKKSSW.

It belongs to the universal ribosomal protein uS14 family.

It localises to the mitochondrion. This is Small ribosomal subunit protein uS14m (RPS14) from Brassica napus (Rape).